Here is a 930-residue protein sequence, read N- to C-terminus: Protein translocase subunit SecA (930 aa).

Residues Gln87, 105 to 109 (GEGKT), and Asp516 each bind ATP. Residues Cys914, Cys916, Cys925, and His926 each coordinate Zn(2+).

It belongs to the SecA family. In terms of assembly, monomer and homodimer. Part of the essential Sec protein translocation apparatus which comprises SecA, SecYEG and auxiliary proteins SecDF-YajC and YidC. Requires Zn(2+) as cofactor.

The protein localises to the cell inner membrane. Its subcellular location is the cytoplasm. The enzyme catalyses ATP + H2O + cellular proteinSide 1 = ADP + phosphate + cellular proteinSide 2.. In terms of biological role, part of the Sec protein translocase complex. Interacts with the SecYEG preprotein conducting channel. Has a central role in coupling the hydrolysis of ATP to the transfer of proteins into and across the cell membrane, serving both as a receptor for the preprotein-SecB complex and as an ATP-driven molecular motor driving the stepwise translocation of polypeptide chains across the membrane. The chain is Protein translocase subunit SecA from Variovorax paradoxus (strain S110).